The following is a 205-amino-acid chain: Urease accessory protein UreG (205 aa).

12-19 (GPVGSGKT) provides a ligand contact to GTP.

It belongs to the SIMIBI class G3E GTPase family. UreG subfamily. In terms of assembly, homodimer. UreD, UreF and UreG form a complex that acts as a GTP-hydrolysis-dependent molecular chaperone, activating the urease apoprotein by helping to assemble the nickel containing metallocenter of UreC. The UreE protein probably delivers the nickel.

It is found in the cytoplasm. Facilitates the functional incorporation of the urease nickel metallocenter. This process requires GTP hydrolysis, probably effectuated by UreG. This is Urease accessory protein UreG from Pseudomonas savastanoi pv. phaseolicola (strain 1448A / Race 6) (Pseudomonas syringae pv. phaseolicola (strain 1448A / Race 6)).